Reading from the N-terminus, the 242-residue chain is Phosphoribosylaminoimidazole-succinocarboxamide synthase (242 aa).

It belongs to the SAICAR synthetase family.

It carries out the reaction 5-amino-1-(5-phospho-D-ribosyl)imidazole-4-carboxylate + L-aspartate + ATP = (2S)-2-[5-amino-1-(5-phospho-beta-D-ribosyl)imidazole-4-carboxamido]succinate + ADP + phosphate + 2 H(+). Its pathway is purine metabolism; IMP biosynthesis via de novo pathway; 5-amino-1-(5-phospho-D-ribosyl)imidazole-4-carboxamide from 5-amino-1-(5-phospho-D-ribosyl)imidazole-4-carboxylate: step 1/2. This is Phosphoribosylaminoimidazole-succinocarboxamide synthase from Ehrlichia chaffeensis (strain ATCC CRL-10679 / Arkansas).